A 256-amino-acid chain; its full sequence is Small ribosomal subunit protein eS1B (256 aa).

Ala2 is modified (N-acetylalanine; partial).

Belongs to the eukaryotic ribosomal protein eS1 family. Component of the small ribosomal subunit. Mature ribosomes consist of a small (40S) and a large (60S) subunit. The 40S subunit contains about 33 different proteins and 1 molecule of RNA (18S). The 60S subunit contains about 49 different proteins and 3 molecules of RNA (25S, 5.8S and 5S).

The protein localises to the cytoplasm. The sequence is that of Small ribosomal subunit protein eS1B from Clavispora lusitaniae (strain ATCC 42720) (Yeast).